A 196-amino-acid chain; its full sequence is uncharacterized protein (196 aa).

The helical transmembrane segment at 71 to 87 threads the bilayer; sequence YVKLIGTGCYVAILISG.

Its subcellular location is the membrane. This is an uncharacterized protein from Dictyostelium discoideum (Social amoeba).